A 97-amino-acid chain; its full sequence is Co-chaperonin GroES (97 aa).

It belongs to the GroES chaperonin family. Heptamer of 7 subunits arranged in a ring. Interacts with the chaperonin GroEL.

It localises to the cytoplasm. Together with the chaperonin GroEL, plays an essential role in assisting protein folding. The GroEL-GroES system forms a nano-cage that allows encapsulation of the non-native substrate proteins and provides a physical environment optimized to promote and accelerate protein folding. GroES binds to the apical surface of the GroEL ring, thereby capping the opening of the GroEL channel. In Aeromonas salmonicida, this protein is Co-chaperonin GroES.